The following is an 86-amino-acid chain: NAD(P)H-quinone oxidoreductase subunit O (86 aa).

It belongs to the complex I NdhO subunit family. In terms of assembly, NDH-1 can be composed of about 15 different subunits; different subcomplexes with different compositions have been identified which probably have different functions.

The protein localises to the cellular thylakoid membrane. The catalysed reaction is a plastoquinone + NADH + (n+1) H(+)(in) = a plastoquinol + NAD(+) + n H(+)(out). It carries out the reaction a plastoquinone + NADPH + (n+1) H(+)(in) = a plastoquinol + NADP(+) + n H(+)(out). NDH-1 shuttles electrons from an unknown electron donor, via FMN and iron-sulfur (Fe-S) centers, to quinones in the respiratory and/or the photosynthetic chain. The immediate electron acceptor for the enzyme in this species is believed to be plastoquinone. Couples the redox reaction to proton translocation, and thus conserves the redox energy in a proton gradient. Cyanobacterial NDH-1 also plays a role in inorganic carbon-concentration. The protein is NAD(P)H-quinone oxidoreductase subunit O of Prochlorococcus marinus (strain SARG / CCMP1375 / SS120).